A 197-amino-acid polypeptide reads, in one-letter code: MLTKPSALSRLVGELKKLPGVGERTALRLAFHLLKTPQNLTALSESLLEVKSRVRSCSICFAITEDDPCAICAGDRDTGTICVVENSQDLMALERSNAYHGTYHVLEGVISPLAGIGPSELRIAELLARIGRGGVDEVVIATNFTVEGEATALYLAKLLKPLGIRISRLAHGIPLGSDIEYVDAATVQWALQGRNQL.

The segment at 57–72 adopts a C4-type zinc-finger fold; that stretch reads CSICFAITEDDPCAIC. The Toprim domain maps to 79–174; sequence GTICVVENSQ…RISRLAHGIP (96 aa).

This sequence belongs to the RecR family.

Its function is as follows. May play a role in DNA repair. It seems to be involved in an RecBC-independent recombinational process of DNA repair. It may act with RecF and RecO. In Pelobacter propionicus (strain DSM 2379 / NBRC 103807 / OttBd1), this protein is Recombination protein RecR.